We begin with the raw amino-acid sequence, 300 residues long: D-alanine--D-alanine ligase (300 aa).

The 195-residue stretch at 99–293 (KKILKYANIN…FAELLNSIVK (195 aa)) folds into the ATP-grasp domain. An ATP-binding site is contributed by 126–181 (IEKIGYPVFVKPNSGGSSVATNLVKDKEGIKEAVELALKYDKEVMIENYTKGEEIT). Mg(2+) contacts are provided by Asp248, Glu260, and Asn262.

It belongs to the D-alanine--D-alanine ligase family. Mg(2+) is required as a cofactor. Requires Mn(2+) as cofactor.

It is found in the cytoplasm. It catalyses the reaction 2 D-alanine + ATP = D-alanyl-D-alanine + ADP + phosphate + H(+). It participates in cell wall biogenesis; peptidoglycan biosynthesis. Functionally, cell wall formation. This Clostridium botulinum (strain ATCC 19397 / Type A) protein is D-alanine--D-alanine ligase.